The sequence spans 534 residues: Probable alpha-galactosidase A (534 aa).

Residues 1 to 25 (MRLITRWIPLANALASTMPVQVVAS) form the signal peptide. Cysteine 47 and cysteine 79 are disulfide-bonded. Residues asparagine 50, asparagine 88, asparagine 94, and asparagine 124 are each glycosylated (N-linked (GlcNAc...) asparagine). A disulfide bridge links cysteine 127 with cysteine 157. The Nucleophile role is filled by aspartate 155. An N-linked (GlcNAc...) asparagine glycan is attached at asparagine 204. The active-site Proton donor is the aspartate 213. The Ricin B-type lectin domain maps to 413-534 (CSQVIPTGLI…GLPAGVHVAL (122 aa)). Cysteine 430 and cysteine 443 are oxidised to a cystine. Asparagine 444 carries an N-linked (GlcNAc...) asparagine glycan. The cysteines at positions 468 and 481 are disulfide-linked.

Belongs to the glycosyl hydrolase 27 family.

The protein resides in the secreted. The enzyme catalyses Hydrolysis of terminal, non-reducing alpha-D-galactose residues in alpha-D-galactosides, including galactose oligosaccharides, galactomannans and galactolipids.. Its function is as follows. Hydrolyzes a variety of simple alpha-D-galactoside as well as more complex molecules such as oligosaccharides and polysaccharides. This is Probable alpha-galactosidase A (aglA) from Aspergillus flavus (strain ATCC 200026 / FGSC A1120 / IAM 13836 / NRRL 3357 / JCM 12722 / SRRC 167).